A 259-amino-acid polypeptide reads, in one-letter code: Secretion system apparatus protein SsaT (259 aa).

The next 6 membrane-spanning stretches (helical) occupy residues Leu-9–Leu-29, Gly-35–Ile-55, Val-78–Ala-98, Leu-127–Leu-147, Ile-185–Leu-205, and Val-214–Phe-234.

Belongs to the FliR/MopE/SpaR family.

The protein resides in the cell membrane. Part of a type III secretion system. This Salmonella typhimurium (strain LT2 / SGSC1412 / ATCC 700720) protein is Secretion system apparatus protein SsaT (ssaT).